Here is a 675-residue protein sequence, read N- to C-terminus: Potassium-transporting ATPase ATP-binding subunit (675 aa).

A run of 4 helical transmembrane segments spans residues 34 to 54, 65 to 85, 216 to 236, and 245 to 265; these read IMFV…FPDI, LITI…SEAF, IALF…IVTL, and LILP…TTIG. Asp304 serves as the catalytic 4-aspartylphosphate intermediate. ATP-binding positions include Asp341, Glu345, 372–379, and Lys390; that span reads FTAETRMS. Mg(2+) contacts are provided by Asp513 and Asp517. 3 helical membrane-spanning segments follow: residues 569–591, 611–631, and 644–664; these read ALTT…ALMM, AIIS…PIAM, and IFIN…FLGI.

Belongs to the cation transport ATPase (P-type) (TC 3.A.3) family. Type IA subfamily. In terms of assembly, the system is composed of three essential subunits: KdpA, KdpB and KdpC.

The protein localises to the cell membrane. The catalysed reaction is K(+)(out) + ATP + H2O = K(+)(in) + ADP + phosphate + H(+). Its function is as follows. Part of the high-affinity ATP-driven potassium transport (or Kdp) system, which catalyzes the hydrolysis of ATP coupled with the electrogenic transport of potassium into the cytoplasm. This subunit is responsible for energy coupling to the transport system and for the release of the potassium ions to the cytoplasm. The chain is Potassium-transporting ATPase ATP-binding subunit from Staphylococcus aureus (strain bovine RF122 / ET3-1).